The following is a 1871-amino-acid chain: Girdin (1871 aa).

The region spanning 12-132 is the Calponin-homology (CH) domain; it reads QFMTSPLVTW…KLLLLLLGCA (121 aa). Residues 196-425 are a coiled coil; the sequence is HLKRLIDERD…EMAQKQSMDE (230 aa). Serine 233, serine 237, and serine 449 each carry phosphoserine. A coiled-coil region spans residues 458-1385; it reads TSSRLLKLEM…KIMDQYKFYD (928 aa). Disordered stretches follow at residues 816–842 and 1010–1035; these read ENKS…KRLR and RQDE…RESQ. Residue serine 1020 is modified to Phosphoserine. The span at 1026 to 1035 shows a compositional bias: basic and acidic residues; that stretch reads EDNKWERESQ. Serine 1387 bears the Phosphoserine mark. A phosphoinositide-binding region spans residues 1390-1408; sequence RRRGNWITLKMRKLIKSKK. Residues 1407-1416 show a composition bias toward basic and acidic residues; it reads KKDINRERQK. Disordered stretches follow at residues 1407-1459 and 1559-1601; these read KKDI…LGTK and TTSF…SNNN. The residue at position 1417 (serine 1417) is a Phosphoserine; by PKB/AKT1. 3 stretches are compositionally biased toward polar residues: residues 1417-1430, 1445-1459, and 1559-1578; these read SLTL…SSEG, VGSN…LGTK, and TTSF…STGS. Threonine 1421 carries the phosphothreonine modification. Residues 1672 to 1702 carry the GBA motif; that stretch reads KTGSPGSEVVTLQQFLEESNKLTSVQIKSSS. Threonine 1673 is modified (phosphothreonine). Serine 1675 bears the Phosphoserine mark. At serine 1690 the chain carries Phosphoserine; by PKC/PRKCQ. The segment at 1713-1823 is SH2-like; required for interaction with growth factor receptors; it reads SLSVSSDFLG…GTTRRTSIHD (111 aa). At serine 1717 the chain carries Phosphoserine. A disordered region spans residues 1736-1871; sequence SGKTPGDFYD…KSRSREQQSS (136 aa). The span at 1743 to 1763 shows a compositional bias: basic and acidic residues; sequence FYDRRTTKPEFLRPGPRKTED. 2 positions are modified to phosphotyrosine: tyrosine 1765 and tyrosine 1799. 2 stretches are compositionally biased toward polar residues: residues 1787-1799 and 1807-1818; these read SSLS…SNPY and SVISTAEGTTRR. A phosphoserine mark is found at serine 1820 and serine 1837. Over residues 1820–1830 the composition is skewed to basic and acidic residues; sequence SIHDFLTKDSR. A compositionally biased stretch (low complexity) spans 1838–1851; it reads PPAAADSNTTAASN. The segment covering 1854–1871 has biased composition (basic and acidic residues); sequence KVQESRNSKSRSREQQSS.

It belongs to the CCDC88 family. Homodimer. Interacts (via GBA motif) with guanine nucleotide-binding protein G(i) alpha subunits GNAI1, GNAI2 and GNAI3. Also interacts (via GNA motif) with guanine nucleotide-binding protein G(s) alpha subunit GNAS. Interaction with G(i) alpha subunits occurs before interaction with GNAS and is regulated by phosphorylation; phosphorylation at Ser-1675 enhances binding to G(i) alpha subunits while phosphorylation at Ser-1690 abolishes G(i) alpha subunit binding, promoting binding to GNAS. Interacts (via C-terminal SH2-like region) with growth factor receptors EGFR, INSR and KDR/VEGFR2 (via their autophosphorylated cytoplasmic tails). Forms a complex with EGFR and GNAI3 which leads to enhanced EGFR signaling and triggering of cell migration; ligand stimulation is required for recruitment of GNAI3 to the complex. Interacts (tyrosine-phosphorylated form) with phosphatidylinositol 3-kinase (PI3K) regulatory subunit PIK3R1/p85a (via SH2 domains); the interaction enables recruitment of PIK3R1 to the EGFR receptor, enhancing PI3K activity and cell migration. Interacts with serine/threonine-protein kinase PRKCQ; the interaction leads to phosphorylation of CCDC88A and inhibition of its guanine nucleotide exchange factor activity. Interacts (via C-terminus) with DISC1; the interaction is direct. Interacts with AKT proteins; the interaction is inhibited in the presence of DISC1. Interacts with AKT1/PKB (via C-terminus). The non-phosphorylated form interacts with phosphatidylinositol 4-phosphate [PI(4)P] and weakly with phosphatidylinositol 3-phosphate [PI(3)P]. Interacts with microtubules. Interacts with actin. In terms of processing, phosphorylation is induced by epidermal growth factor (EGF) in a phosphoinositide 3-kinase (PI3K)-dependent manner. Phosphorylation by AKT1/PKB is necessary for delocalization from the cell membrane and for cell migration. Phosphorylated on tyrosine residues which promotes binding to phosphatidylinositol 3-kinase (PI3K) regulatory subunit PIK3R1/p85a and enhances PI3K activity. Tyrosine-phosphorylated by both receptor and non-receptor tyrosine kinases in vitro. Tyrosine phosphorylation is required for AKT1-dependent phosphorylation of Ser-1417. Phosphorylation at Ser-1690 by PRKCQ disrupts interaction with GNAI3 and inhibits guanine nucleotide exchange factor activity. Expressed ubiquitously.

It localises to the cell membrane. The protein resides in the cytoplasm. The protein localises to the cytosol. Its subcellular location is the cytoplasmic vesicle. It is found in the cell projection. It localises to the lamellipodium. The protein resides in the cytoskeleton. The protein localises to the cilium basal body. Its subcellular location is the microtubule organizing center. It is found in the centrosome. It localises to the centriole. Functionally, bifunctional modulator of guanine nucleotide-binding proteins (G proteins). Acts as a non-receptor guanine nucleotide exchange factor which binds to and activates guanine nucleotide-binding protein G(i) alpha subunits. Also acts as a guanine nucleotide dissociation inhibitor for guanine nucleotide-binding protein G(s) subunit alpha GNAS. Essential for cell migration. Interacts in complex with G(i) alpha subunits with the EGFR receptor, retaining EGFR at the cell membrane following ligand stimulation and promoting EGFR signaling which triggers cell migration. Binding to Gi-alpha subunits displaces the beta and gamma subunits from the heterotrimeric G-protein complex which enhances phosphoinositide 3-kinase (PI3K)-dependent phosphorylation and kinase activity of AKT1/PKB. Phosphorylation of AKT1/PKB induces the phosphorylation of downstream effectors GSK3 and FOXO1/FKHR, and regulates DNA replication and cell proliferation. Binds in its tyrosine-phosphorylated form to the phosphatidylinositol 3-kinase (PI3K) regulatory subunit PIK3R1 which enables recruitment of PIK3R1 to the EGFR receptor, enhancing PI3K activity and cell migration. Plays a role as a key modulator of the AKT-mTOR signaling pathway, controlling the tempo of the process of newborn neuron integration during adult neurogenesis, including correct neuron positioning, dendritic development and synapse formation. Inhibition of G(s) subunit alpha GNAS leads to reduced cellular levels of cAMP and suppression of cell proliferation. Essential for the integrity of the actin cytoskeleton. Required for formation of actin stress fibers and lamellipodia. May be involved in membrane sorting in the early endosome. Plays a role in ciliogenesis and cilium morphology and positioning and this may partly be through regulation of the localization of scaffolding protein CROCC/Rootletin. This is Girdin (CCDC88A) from Homo sapiens (Human).